The sequence spans 379 residues: Copper-containing nitrite reductase (379 aa).

The segment at residues 1 to 32 is a signal peptide (tat-type signal); that stretch reads MSEQFRLTRRSMLAGAAVAGALAPVVTSVAHA. Plastocyanin-like domains are found at residues 33–214 and 215–379; these read EGGG…YDKV and YYVG…PTSG. Cu cation-binding residues include His-134, His-139, His-174, Cys-175, His-184, Met-189, and His-345.

It belongs to the multicopper oxidase family. In terms of assembly, homotrimer. The cofactor is Cu(2+). Requires Cu(+) as cofactor. FAD serves as cofactor. Predicted to be exported by the Tat system. The position of the signal peptide cleavage has not been experimentally proven.

It localises to the periplasm. The enzyme catalyses nitric oxide + Fe(III)-[cytochrome c] + H2O = Fe(II)-[cytochrome c] + nitrite + 2 H(+). The protein operates within nitrogen metabolism; nitrate reduction (denitrification); dinitrogen from nitrate: step 2/4. The sequence is that of Copper-containing nitrite reductase (nirU) from Neorhizobium galegae (Rhizobium galegae).